A 297-amino-acid polypeptide reads, in one-letter code: Protoheme IX farnesyltransferase (297 aa).

The next 9 helical transmembrane spans lie at 23–43, 49–69, 90–110, 117–137, 144–164, 171–191, 215–235, 238–258, and 277–297; these read VTQLAVFCAIIGMFLAVPGLP, VFGTLGIWLLAAAAFAINCLI, ISAAQVISLSGLLGGAGMLVL, LTMWLTFATFVGYAIIYTVIL, NIVIGGLSGAMPPALGWAAVA, AWVLVLIIFIWTPPHFWALAL, RLHILLYSLALVATTTLPYII, SGLLYLASALALGGMFVAYAW, and ILYLALLFAALLMDHWAGLLA.

This sequence belongs to the UbiA prenyltransferase family. Protoheme IX farnesyltransferase subfamily.

The protein localises to the cell inner membrane. It catalyses the reaction heme b + (2E,6E)-farnesyl diphosphate + H2O = Fe(II)-heme o + diphosphate. It functions in the pathway porphyrin-containing compound metabolism; heme O biosynthesis; heme O from protoheme: step 1/1. Functionally, converts heme B (protoheme IX) to heme O by substitution of the vinyl group on carbon 2 of heme B porphyrin ring with a hydroxyethyl farnesyl side group. The polypeptide is Protoheme IX farnesyltransferase (Bordetella petrii (strain ATCC BAA-461 / DSM 12804 / CCUG 43448)).